The sequence spans 229 residues: Urease accessory protein UreF (229 aa).

The protein belongs to the UreF family. UreD, UreF and UreG form a complex that acts as a GTP-hydrolysis-dependent molecular chaperone, activating the urease apoprotein by helping to assemble the nickel containing metallocenter of UreC. The UreE protein probably delivers the nickel.

It is found in the cytoplasm. Its function is as follows. Required for maturation of urease via the functional incorporation of the urease nickel metallocenter. The sequence is that of Urease accessory protein UreF from Corynebacterium efficiens (strain DSM 44549 / YS-314 / AJ 12310 / JCM 11189 / NBRC 100395).